Reading from the N-terminus, the 427-residue chain is Type II methyltransferase M1.BsuMI (427 aa).

One can recognise an SAM-dependent MTase C5-type domain in the interval 84 to 427 (INIADLFSGC…SYLLALHQLR (344 aa)). Cysteine 176 is an active-site residue.

Belongs to the class I-like SAM-binding methyltransferase superfamily. C5-methyltransferase family. As to quaternary structure, monomer. May form a complex with YdiP, also seems to be active alone.

It catalyses the reaction a 2'-deoxycytidine in DNA + S-adenosyl-L-methionine = a 5-methyl-2'-deoxycytidine in DNA + S-adenosyl-L-homocysteine + H(+). Somewhat inhibited by MgCl(2) and spermidine, strongly inhibited by MnCl(2). Its function is as follows. A methylase, recognizes the double-stranded sequence 5'-YTCGAR-3', methylates C-3 on both strands, and protects the DNA from cleavage by the BsuMI endonuclease. The protein is Type II methyltransferase M1.BsuMI (ydiO) of Bacillus subtilis (strain 168).